Reading from the N-terminus, the 532-residue chain is Flavin-containing monooxygenase 1 (532 aa).

An N-acetylalanine modification is found at Ala-2. The Lumenal portion of the chain corresponds to 2-510 (AKRVAIVGAG…TRIVQESPTP (509 aa)). Residues 9-13 (GAGVS), Glu-32, 40-41 (LW), and 61-62 (NS) contribute to the FAD site. Residues 60–61 (SN) and 195–198 (SGTD) contribute to the NADP(+) site. A helical membrane pass occupies residues 511 to 531 (FASLLKLLSLLALLMAIFLIF). Position 532 (Leu-532) is a topological domain, cytoplasmic.

The protein belongs to the FMO family. Requires FAD as cofactor. Liver.

The protein localises to the endoplasmic reticulum membrane. It catalyses the reaction hypotaurine + NADPH + O2 + H(+) = taurine + NADP(+) + H2O. The catalysed reaction is hypotaurine + NADH + O2 + H(+) = taurine + NAD(+) + H2O. It carries out the reaction trimethylamine + NADPH + O2 = trimethylamine N-oxide + NADP(+) + H2O. The enzyme catalyses N,N-dimethylaniline + NADPH + O2 + H(+) = N,N-dimethylaniline N-oxide + NADP(+) + H2O. In terms of biological role, broad spectrum monooxygenase that catalyzes the oxygenation of a wide variety of nitrogen- and sulfur-containing compounds including xenobiotics. Catalyzes the S-oxygenation of hypotaurine to produce taurine, an organic osmolyte involved in cell volume regulation as well as a variety of cytoprotective and developmental processes. In vitro, catalyzes the N-oxygenation of trimethylamine (TMA) to produce trimethylamine N-oxide (TMAO) and could therefore participate to the detoxification of this compound that is generated by the action of gut microbiota from dietary precursors such as choline, choline containing compounds, betaine or L-carnitine. This Canis lupus familiaris (Dog) protein is Flavin-containing monooxygenase 1 (FMO1).